A 1402-amino-acid polypeptide reads, in one-letter code: DNA-directed RNA polymerase subunit beta' (1402 aa).

Zn(2+) is bound by residues Cys71, Cys73, Cys86, and Cys89. 3 residues coordinate Mg(2+): Asp462, Asp464, and Asp466. Zn(2+) contacts are provided by Cys811, Cys885, Cys892, and Cys895.

The protein belongs to the RNA polymerase beta' chain family. The RNAP catalytic core consists of 2 alpha, 1 beta, 1 beta' and 1 omega subunit. When a sigma factor is associated with the core the holoenzyme is formed, which can initiate transcription. Mg(2+) serves as cofactor. The cofactor is Zn(2+).

It catalyses the reaction RNA(n) + a ribonucleoside 5'-triphosphate = RNA(n+1) + diphosphate. DNA-dependent RNA polymerase catalyzes the transcription of DNA into RNA using the four ribonucleoside triphosphates as substrates. In Rhizobium johnstonii (strain DSM 114642 / LMG 32736 / 3841) (Rhizobium leguminosarum bv. viciae), this protein is DNA-directed RNA polymerase subunit beta'.